The primary structure comprises 108 residues: Small ribosomal subunit protein bS16 (108 aa).

This sequence belongs to the bacterial ribosomal protein bS16 family.

The chain is Small ribosomal subunit protein bS16 from Orientia tsutsugamushi (strain Boryong) (Rickettsia tsutsugamushi).